Consider the following 103-residue polypeptide: MASYAIVKTGGKQYKVAVGDVVKVEKLDSEPGASVSLPVALVVDGANVTSKAEDLAKVAVTGEVLEHTKGPKIRIHKFKNKTGYHKRQGHRQQLTVLKVTGIK.

The protein belongs to the bacterial ribosomal protein bL21 family. As to quaternary structure, part of the 50S ribosomal subunit. Contacts protein L20.

This protein binds to 23S rRNA in the presence of protein L20. This chain is Large ribosomal subunit protein bL21, found in Mycobacterium sp. (strain JLS).